The chain runs to 144 residues: UPF0102 protein sce2912 (144 aa).

This sequence belongs to the UPF0102 family.

This is UPF0102 protein sce2912 from Sorangium cellulosum (strain So ce56) (Polyangium cellulosum (strain So ce56)).